Here is a 321-residue protein sequence, read N- to C-terminus: Cytochrome f (321 aa).

The signal sequence occupies residues 1-35; the sequence is MQNTNTLNWINKLIYLSISIPIFFLILVTTYPNSV. Positions 38, 58, 61, and 62 each coordinate heme. A helical transmembrane segment spans residues 287–307; it reads MEGLILFFISVILAQVFLVLK.

It belongs to the cytochrome f family. In terms of assembly, the 4 large subunits of the cytochrome b6-f complex are cytochrome b6, subunit IV (17 kDa polypeptide, petD), cytochrome f and the Rieske protein, while the 4 small subunits are PetG, PetL, PetM and PetN. The complex functions as a dimer. Requires heme as cofactor.

The protein resides in the plastid. The protein localises to the chloroplast thylakoid membrane. Its function is as follows. Component of the cytochrome b6-f complex, which mediates electron transfer between photosystem II (PSII) and photosystem I (PSI), cyclic electron flow around PSI, and state transitions. In Chara vulgaris (Common stonewort), this protein is Cytochrome f.